The sequence spans 115 residues: Large ribosomal subunit protein bL19 (115 aa).

It belongs to the bacterial ribosomal protein bL19 family.

This protein is located at the 30S-50S ribosomal subunit interface and may play a role in the structure and function of the aminoacyl-tRNA binding site. This Leifsonia xyli subsp. xyli (strain CTCB07) protein is Large ribosomal subunit protein bL19.